The chain runs to 227 residues: 2-heptyl-1-hydroxyquinolin-4(1H)-one methyltransferase (227 aa).

This sequence belongs to the methyltransferase superfamily. As to quaternary structure, monomer.

The protein resides in the cytoplasm. The enzyme catalyses 2-heptyl-1-hydroxy-4(1H)-quinolinone + S-adenosyl-L-methionine = 2-heptyl-1-methoxy-4(1H)-quinolinone + S-adenosyl-L-homocysteine + H(+). It carries out the reaction 3-bromo-2-heptyl-1-hydroxy-4(1H)-quinolinone + S-adenosyl-L-methionine = 3-bromo-2-heptyl-1-methoxy-4(1H)-quinolinone + S-adenosyl-L-homocysteine + H(+). Involved in cellular response to chemical stress and may contribute to resistance toward antimicrobial natural compounds as well as drugs. Catalyzes the methylation and detoxification of the P.aeruginosa toxin 2-heptyl-1-hydroxy-4(1H)-quinolinone (HQNO) to 2-heptyl-1-methoxy-4(1H)-quinolinone (HMOQ). Can also methylate 3-bromo-2-heptyl-1-hydroxy-4(1H)-quinolinone, and shows much lower activity with 1-hydroxyquinolin-4(1H)-one, quercetin, 4-hydroxyquinolin-2(1H)-one (DHQ) and 4-hydroxyisoquinolin-1(2H)-one. The chain is 2-heptyl-1-hydroxyquinolin-4(1H)-one methyltransferase from Mycobacteroides abscessus (strain ATCC 19977 / DSM 44196 / CCUG 20993 / CIP 104536 / JCM 13569 / NCTC 13031 / TMC 1543 / L948) (Mycobacterium abscessus).